The chain runs to 106 residues: uncharacterized protein (106 aa).

Belongs to the HesB/IscA family.

This is an uncharacterized protein from Bradyrhizobium diazoefficiens (strain JCM 10833 / BCRC 13528 / IAM 13628 / NBRC 14792 / USDA 110).